The primary structure comprises 154 residues: Large ribosomal subunit protein uL13 (154 aa).

This sequence belongs to the universal ribosomal protein uL13 family. In terms of assembly, part of the 50S ribosomal subunit.

In terms of biological role, this protein is one of the early assembly proteins of the 50S ribosomal subunit, although it is not seen to bind rRNA by itself. It is important during the early stages of 50S assembly. The chain is Large ribosomal subunit protein uL13 from Rhodospirillum rubrum (strain ATCC 11170 / ATH 1.1.1 / DSM 467 / LMG 4362 / NCIMB 8255 / S1).